A 347-amino-acid chain; its full sequence is tRNA N6-adenosine threonylcarbamoyltransferase (347 aa).

Fe cation is bound by residues H111 and H115. Substrate is bound by residues 134–138, D167, G180, and N277; that span reads LVSGG. D305 is a binding site for Fe cation.

The protein belongs to the KAE1 / TsaD family. Fe(2+) is required as a cofactor.

The protein resides in the cytoplasm. It carries out the reaction L-threonylcarbamoyladenylate + adenosine(37) in tRNA = N(6)-L-threonylcarbamoyladenosine(37) in tRNA + AMP + H(+). Required for the formation of a threonylcarbamoyl group on adenosine at position 37 (t(6)A37) in tRNAs that read codons beginning with adenine. Is involved in the transfer of the threonylcarbamoyl moiety of threonylcarbamoyl-AMP (TC-AMP) to the N6 group of A37, together with TsaE and TsaB. TsaD likely plays a direct catalytic role in this reaction. The sequence is that of tRNA N6-adenosine threonylcarbamoyltransferase from Ralstonia pickettii (strain 12J).